The sequence spans 123 residues: Large ribosomal subunit protein bL12 (123 aa).

The protein belongs to the bacterial ribosomal protein bL12 family. Homodimer. Part of the ribosomal stalk of the 50S ribosomal subunit. Forms a multimeric L10(L12)X complex, where L10 forms an elongated spine to which 2 to 4 L12 dimers bind in a sequential fashion. Binds GTP-bound translation factors.

In terms of biological role, forms part of the ribosomal stalk which helps the ribosome interact with GTP-bound translation factors. Is thus essential for accurate translation. This chain is Large ribosomal subunit protein bL12, found in Hydrogenovibrio crunogenus (strain DSM 25203 / XCL-2) (Thiomicrospira crunogena).